The sequence spans 1173 residues: AT-rich interactive domain-containing protein 5B (1173 aa).

K130 participates in a covalent cross-link: Glycyl lysine isopeptide (Lys-Gly) (interchain with G-Cter in SUMO2). Positions 249-283 are disordered; that stretch reads PNLKGRPRKKKPCPQRRDSFSGGKDPNNNSDGKSV. The span at 253-262 shows a compositional bias: basic residues; sequence GRPRKKKPCP. Residue S267 is modified to Phosphoserine. Residues 322-414 form the ARID domain; it reads RADEQAFLVA…LILPYERFIK (93 aa). At K340 the chain carries N6,N6-dimethyllysine. The interval 416-607 is disordered; sequence EEDKPLPPIK…QPPLANQSEV (192 aa). Residue K449 forms a Glycyl lysine isopeptide (Lys-Gly) (interchain with G-Cter in SUMO2) linkage. Positions 450-462 are enriched in basic and acidic residues; it reads HEISKSKKEKENA. Glycyl lysine isopeptide (Lys-Gly) (interchain with G-Cter in SUMO2) cross-links involve residues K497 and K499. A compositionally biased stretch (low complexity) spans 547–557; sequence SAPLAPTPGTG. Residues 593–605 show a composition bias toward polar residues; that stretch reads GFSTTQPPLANQS. Residues K763 and K769 each participate in a glycyl lysine isopeptide (Lys-Gly) (interchain with G-Cter in SUMO2) cross-link. 3 disordered regions span residues 777–802, 877–924, and 936–965; these read EPRF…VEKR, KKSA…GTSQ, and HPKA…KPHP. Positions 782-796 are enriched in basic residues; the sequence is FSKHHLSPSKKSRGR. Residues K878, K901, K905, and K920 each participate in a glycyl lysine isopeptide (Lys-Gly) (interchain with G-Cter in SUMO2) cross-link. Glycyl lysine isopeptide (Lys-Gly) (interchain with G-Cter in SUMO2) cross-links involve residues K973, K985, and K998. S1017 is subject to Phosphoserine. Residues 1017–1055 form a disordered region; that stretch reads SPLDPAKEVSGKEKASEQESEGSKAAHSGHSGGTSEGHK. Residues 1021-1040 are compositionally biased toward basic and acidic residues; sequence PAKEVSGKEKASEQESEGSK. Residues K1040 and K1055 each participate in a glycyl lysine isopeptide (Lys-Gly) (interchain with G-Cter in SUMO2) cross-link. Phosphoserine is present on S1118.

The protein belongs to the ARID5B family. Post-translationally, methylation at Lys-340 prevents DNA-binding. Demethylation by PHF2 promotes recruitment of the PHF2-ARID5B complex to promoters.

The protein resides in the nucleus. Functionally, transcription coactivator that binds to the 5'-AATA[CT]-3' core sequence and plays a key role in adipogenesis and liver development. Acts by forming a complex with phosphorylated PHF2, which mediates demethylation at Lys-340, leading to target the PHF2-ARID5B complex to target promoters, where PHF2 mediates demethylation of dimethylated 'Lys-9' of histone H3 (H3K9me2), followed by transcription activation of target genes. The PHF2-ARID5B complex acts as a coactivator of HNF4A in liver. Required for adipogenesis: regulates triglyceride metabolism in adipocytes by regulating expression of adipogenic genes. Overexpression leads to induction of smooth muscle marker genes, suggesting that it may also act as a regulator of smooth muscle cell differentiation and proliferation. This chain is AT-rich interactive domain-containing protein 5B (ARID5B), found in Bos taurus (Bovine).